Consider the following 548-residue polypeptide: Myrosinase (548 aa).

Residues 1–20 (MKLLHGLALVFLLAAASCKA) form the signal peptide. 3 cysteine pairs are disulfide-bonded: C26-C458, C34-C454, and C226-C236. Q59 is a substrate binding site. Zn(2+) contacts are provided by H76 and D90. N110 is a glycosylation site (N-linked (GlcNAc...) asparagine). Positions 161 and 206 each coordinate substrate. Residue Q207 coordinates L-ascorbate. N-linked (GlcNAc...) asparagine glycosylation is present at N240. L-ascorbate is bound at residue R281. N331 carries an N-linked (GlcNAc...) asparagine glycan. Residue Y352 coordinates substrate. E429 (nucleophile) is an active-site residue. Substrate is bound by residues W477 and 484–485 (EF). Residue N520 is glycosylated (N-linked (GlcNAc...) asparagine).

It belongs to the glycosyl hydrolase 1 family. In terms of assembly, homodimer. In vacuoles called myrosin grains of a certain class of cells, myrosin cells, distributed in the cotyledons and the axis of the embryo as well as in different organs of the growing plant.

The protein localises to the vacuole. The catalysed reaction is a thioglucoside + H2O = a sugar + a thiol.. Functionally, degradation of glucosinolates (glucose residue linked by a thioglucoside bound to an amino acid derivative) to glucose, sulfate and any of the products: thiocyanates, isothiocyanates, nitriles, epithionitriles or oxazolidine-2-thiones. This Brassica napus (Rape) protein is Myrosinase.